Reading from the N-terminus, the 498-residue chain is Probable malate:quinone oxidoreductase (498 aa).

This sequence belongs to the MQO family. FAD serves as cofactor.

It carries out the reaction (S)-malate + a quinone = a quinol + oxaloacetate. It participates in carbohydrate metabolism; tricarboxylic acid cycle; oxaloacetate from (S)-malate (quinone route): step 1/1. In Prochlorococcus marinus (strain MIT 9312), this protein is Probable malate:quinone oxidoreductase.